Reading from the N-terminus, the 125-residue chain is Snaclec B7 (125 aa).

Cystine bridges form between C2–C13, C30–C119, and C96–C111. Positions 9–120 (HEGHCYKVFK…CNISQYFVCQ (112 aa)) constitute a C-type lectin domain. N-linked (GlcNAc...) asparagine glycosylation is present at N112.

The protein belongs to the snaclec family. In terms of assembly, heterodimer; disulfide-linked. Expressed by the venom gland.

Its subcellular location is the secreted. In terms of biological role, interferes with one step of hemostasis (modulation of platelet aggregation, or coagulation cascade, for example). The chain is Snaclec B7 from Macrovipera lebetinus (Levantine viper).